Reading from the N-terminus, the 118-residue chain is Large ribosomal subunit protein bL19 (118 aa).

It belongs to the bacterial ribosomal protein bL19 family.

This protein is located at the 30S-50S ribosomal subunit interface and may play a role in the structure and function of the aminoacyl-tRNA binding site. The protein is Large ribosomal subunit protein bL19 of Helicobacter pylori (strain HPAG1).